The primary structure comprises 410 residues: Chorismate synthase (410 aa).

NADP(+) contacts are provided by R40 and R46. Residues 129–131 (RSS), 257–258 (QA), G302, 317–321 (KPISS), and R343 contribute to the FMN site.

It belongs to the chorismate synthase family. As to quaternary structure, homotetramer. It depends on FMNH2 as a cofactor.

The catalysed reaction is 5-O-(1-carboxyvinyl)-3-phosphoshikimate = chorismate + phosphate. It participates in metabolic intermediate biosynthesis; chorismate biosynthesis; chorismate from D-erythrose 4-phosphate and phosphoenolpyruvate: step 7/7. Functionally, catalyzes the anti-1,4-elimination of the C-3 phosphate and the C-6 proR hydrogen from 5-enolpyruvylshikimate-3-phosphate (EPSP) to yield chorismate, which is the branch point compound that serves as the starting substrate for the three terminal pathways of aromatic amino acid biosynthesis. This reaction introduces a second double bond into the aromatic ring system. The protein is Chorismate synthase of Chlorobaculum parvum (strain DSM 263 / NCIMB 8327) (Chlorobium vibrioforme subsp. thiosulfatophilum).